Consider the following 144-residue polypeptide: Ig heavy chain V region M167 (144 aa).

Residues 1 to 19 form the signal peptide; it reads MKMWLNWVFLLTLLHGIQC. An Ig-like domain is found at 20 to 133; it reads EVKVVESGGG…GNSYFGYFDV (114 aa).

The polypeptide is Ig heavy chain V region M167 (Mus musculus (Mouse)).